We begin with the raw amino-acid sequence, 182 residues long: Vacuolar protein sorting-associated protein 29 (182 aa).

An N6-acetyllysine modification is found at Lys50.

It belongs to the VPS29 family. In terms of assembly, component of the commander complex consisting of the CCC subcomplex and the retriever subcomplex. Component of the heterotrimeric retriever complex formed by VPS26C, VPS29 and VPS35L; within the complex interacts with VPS35L. Component of the heterotrimeric retromer cargo-selective complex (CSC), also described as vacuolar protein sorting subcomplex (VPS), formed by VPS26 (VPS26A or VPS26B), VPS29 and VPS35. The CSC has a highly elongated structure with VPS26 and VPS29 binding independently at opposite distal ends of VPS35 as central platform. The CSC is believed to associate with variable sorting nexins to form functionally distinct retromer complex variants. The originally described retromer complex (also called SNX-BAR retromer) is a pentamer containing the CSC and a heterodimeric membrane-deforming subcomplex formed between SNX1 or SNX2 and SNX5 or SNX6 (also called SNX-BAR subcomplex); the respective CSC and SNX-BAR subcomplexes associate with low affinity. The CSC associates with SNX3 to form a SNX3-retromer complex. The CSC associates with SNX27, the WASH complex and the SNX-BAR subcomplex to form the SNX27-retromer complex. Interacts with VPS26A, VPS35, SNX1, SNX2, SNX3, SNX27, WASHC5. Interacts with TBC1D5; this interaction is blocked by VPS35L in the retriever complex. Interacts with SNX17; the interaction is indirect; SNX17 (via its C-terminus) interacts with the retriever complex (via VPS26C and VPS35L). Interacts with VPS26B and ANKRD27.

It localises to the cytoplasm. The protein localises to the membrane. Its subcellular location is the endosome membrane. The protein resides in the early endosome. It is found in the late endosome. Its function is as follows. Component of the commander complex that is essential for endosomal recycling of transmembrane cargos; the commander complex is composed of the CCC subcomplex and the retriever subcomplex. Component of the retriever complex, which is a heterotrimeric complex related to retromer cargo-selective complex (CSC) and essential for retromer-independent retrieval and recycling of numerous cargos such as integrin alpha-5/beta-1 (ITGA5:ITGB1). Component of the retromer cargo-selective complex (CSC). The CSC is believed to be the core functional component of retromer or respective retromer complex variants acting to prevent missorting of selected transmembrane cargo proteins into the lysosomal degradation pathway. The recruitment of the CSC to the endosomal membrane involves RAB7A and SNX3. The SNX-BAR retromer mediates retrograde transport of cargo proteins from endosomes to the trans-Golgi network (TGN) and is involved in endosome-to-plasma membrane transport for cargo protein recycling. The SNX3-retromer mediates the retrograde endosome-to-TGN transport of WLS distinct from the SNX-BAR retromer pathway. The SNX27-retromer is believed to be involved in endosome-to-plasma membrane trafficking and recycling of a broad spectrum of cargo proteins. The CSC seems to act as recruitment hub for other proteins, such as the WASH complex and TBC1D5. Required to regulate transcytosis of the polymeric immunoglobulin receptor (pIgR-pIgA). In the endosomes, retriever complex drives the retrieval and recycling of NxxY-motif-containing cargo proteins by coupling to SNX17, a cargo essential for the homeostatic maintenance of numerous cell surface proteins associated with processes that include cell migration, cell adhesion, nutrient supply and cell signaling. The recruitment of the retriever complex to the endosomal membrane involves CCC and WASH complexes. Involved in GLUT1 endosome-to-plasma membrane trafficking; the function is dependent of association with ANKRD27. This is Vacuolar protein sorting-associated protein 29 from Rattus norvegicus (Rat).